The sequence spans 336 residues: Ketoreductase adrE (336 aa).

Tyrosine 171 is an NADP(+) binding site.

The protein belongs to the NAD(P)-dependent epimerase/dehydratase family. Dihydroflavonol-4-reductase subfamily.

Its pathway is secondary metabolite biosynthesis; terpenoid biosynthesis. Its function is as follows. Ketoreductase; part of the gene cluster that mediates the biosynthesis of andrastins, meroterpenoid compounds that exhibit inhibitory activity against ras farnesyltransferase, suggesting that they could be promising leads for antitumor agents. The first step of the pathway is the synthesis of 3,5-dimethylorsellinic acid (DMOA) by the polyketide synthase adrD via condensation of one acetyl-CoA starter unit with 3 malonyl-CoA units and 2 methylations. DMAO is then converted to farnesyl-DMAO by the prenyltransferase adrG. The methyltransferase adrK catalyzes the methylation of the carboxyl group of farnesyl-DMAO to farnesyl-DMAO methyl ester which is further converted to epoxyfarnesyl-DMAO methyl ester by the FAD-dependent monooxygenase adrH. The terpene cyclase adrI then catalyzes the carbon skeletal rearrangement to generate the andrastin E, the first compound in the pathway having the andrastin scaffold, with the tetracyclic ring system. The post-cyclization tailoring enzymes adrF, adrE, adrJ, and adrA, are involved in the conversion of andrastin E into andrastin A. The short chain dehydrogenase adrF is responsible for the oxidation of the C-3 a hydroxyl group of andrastin E to yield the corresponding ketone, andrastin D. The ketoreductase adrE stereoselectively reduces the carbonyl moiety to reverse the stereochemistry of the C-3 position to yield andrastin F. The acetyltransferase adrJ is the acetyltransferase that attaches the acetyl group to the C-3 hydroxyl group of andrastin F to yield andrastin C. Finally, the cytochrome P450 monooxygenase adrA catalyzes two sequential oxidation reactions of the C-23 methyl group, to generate the corresponding alcohol andrastin B, and aldehyde andrastin A. The chain is Ketoreductase adrE from Penicillium roqueforti.